The chain runs to 570 residues: Urease subunit alpha (570 aa).

In terms of domain architecture, Urease spans 131–570 (GGFDAHIHFI…LPMAQRYFLF (440 aa)). Residues His-136, His-138, and Lys-219 each contribute to the Ni(2+) site. Lys-219 is modified (N6-carboxylysine). A substrate-binding site is contributed by His-221. 2 residues coordinate Ni(2+): His-248 and His-274. His-322 functions as the Proton donor in the catalytic mechanism. Asp-362 is a Ni(2+) binding site.

Belongs to the metallo-dependent hydrolases superfamily. Urease alpha subunit family. Heterotrimer of UreA (gamma), UreB (beta) and UreC (alpha) subunits. Three heterotrimers associate to form the active enzyme. Ni cation is required as a cofactor. Post-translationally, carboxylation allows a single lysine to coordinate two nickel ions.

The protein resides in the cytoplasm. The catalysed reaction is urea + 2 H2O + H(+) = hydrogencarbonate + 2 NH4(+). It functions in the pathway nitrogen metabolism; urea degradation; CO(2) and NH(3) from urea (urease route): step 1/1. The protein is Urease subunit alpha of Mesorhizobium japonicum (strain LMG 29417 / CECT 9101 / MAFF 303099) (Mesorhizobium loti (strain MAFF 303099)).